A 142-amino-acid polypeptide reads, in one-letter code: Large ribosomal subunit protein uL13 (142 aa).

Belongs to the universal ribosomal protein uL13 family. As to quaternary structure, part of the 50S ribosomal subunit.

Its function is as follows. This protein is one of the early assembly proteins of the 50S ribosomal subunit, although it is not seen to bind rRNA by itself. It is important during the early stages of 50S assembly. This Ruthia magnifica subsp. Calyptogena magnifica protein is Large ribosomal subunit protein uL13.